The chain runs to 819 residues: DNA replication licensing factor Mcm3 (819 aa).

Positions 290-496 (IFELLSKSLA…DVDQMISDHV (207 aa)) constitute an MCM domain. Positions 348, 388, 389, 390, and 392 each coordinate ADP. The Arginine finger signature appears at 472–475 (SRFD). Serine 522 is subject to Phosphoserine. Tyrosine 538 is subject to Phosphotyrosine. Positions 655–717 (DRPSKRRRNS…DAGDLTRRET (63 aa)) are disordered. Phosphoserine occurs at positions 664, 666, 680, and 682. Phosphothreonine occurs at positions 690 and 692. A phosphoserine mark is found at serine 697, serine 735, and serine 739.

The protein belongs to the MCM family. As to quaternary structure, component of the Mcm2-7 complex. The complex forms a toroidal hexameric ring with the proposed subunit order Mcm2-Mcm6-Mcm4-Mcm7-Mcm3-Mcm5.

The protein resides in the nucleus. Its subcellular location is the chromosome. It carries out the reaction ATP + H2O = ADP + phosphate + H(+). Functionally, acts as a component of the Mcm2-7 complex (Mcm complex) (Mcm complex) which is the putative replicative helicase essential for 'once per cell cycle' DNA replication initiation and elongation in eukaryotic cells. Core component of CDC45-MCM-GINS (CMG) helicase, the molecular machine that unwinds template DNA during replication, and around which the replisome is built. The active ATPase sites in the Mcm2-7 ring are formed through the interaction surfaces of two neighboring subunits such that a critical structure of a conserved arginine finger motif is provided in trans relative to the ATP-binding site of the Walker A box of the adjacent subunit. The six ATPase active sites, however, are likely to contribute differentially to the complex helicase activity. This chain is DNA replication licensing factor Mcm3 (Mcm3), found in Drosophila melanogaster (Fruit fly).